We begin with the raw amino-acid sequence, 521 residues long: NAD(P)H-quinone oxidoreductase subunit 2 (521 aa).

The next 14 membrane-spanning stretches (helical) occupy residues 16–36 (ILPEGIVIITLMVVLIGDLIG), 43–63 (WLPYGAIAGLLAALFALYTAW), 80–100 (LSIVFRGIIALSTIVTLLMSI), 110–130 (LAEFIGIMLTATLGGMFLSGA), 133–153 (LVMIFISLEMLSISSYLMTGY), 168–188 (LLIGASSSAIFLYGSSLLYGL), 211–231 (LGLAIALVFVIAGIAFKISAV), 245–265 (PTPVVAFLSVGSKAAGFALAI), 279–299 (WHLIFTALAILSMVLGNVVAL), 307–327 (MLAYSSIGQAGFVMIGLTAGT), 335–355 (VFYLLVYLFMNLGAFSGVILF), 379–399 (LGLSLCLLSLGGIPPLAGFFG), 401–421 (IYLFWAGWQAELYGLVLLALV), and 467–487 (VGLVLSVIATSLAGILSNPLF).

It belongs to the complex I subunit 2 family. NDH-1 can be composed of about 15 different subunits; different subcomplexes with different compositions have been identified which probably have different functions.

It localises to the cellular thylakoid membrane. It catalyses the reaction a plastoquinone + NADH + (n+1) H(+)(in) = a plastoquinol + NAD(+) + n H(+)(out). The catalysed reaction is a plastoquinone + NADPH + (n+1) H(+)(in) = a plastoquinol + NADP(+) + n H(+)(out). Functionally, NDH-1 shuttles electrons from an unknown electron donor, via FMN and iron-sulfur (Fe-S) centers, to quinones in the respiratory and/or the photosynthetic chain. The immediate electron acceptor for the enzyme in this species is believed to be plastoquinone. Couples the redox reaction to proton translocation, and thus conserves the redox energy in a proton gradient. Cyanobacterial NDH-1 also plays a role in inorganic carbon-concentration. This Crocosphaera subtropica (strain ATCC 51142 / BH68) (Cyanothece sp. (strain ATCC 51142)) protein is NAD(P)H-quinone oxidoreductase subunit 2.